Reading from the N-terminus, the 737-residue chain is Fibronectin type III domain-containing protein 7 (737 aa).

Residues 1 to 25 (MAGRPEKCFSLIRFTLLCLKMVISS) form the signal peptide. Fibronectin type-III domains lie at 28-115 (APEI…TVLA), 116-203 (APVL…SPRA), 204-288 (PANI…TVAC), 289-373 (APGR…TAPC), 374-459 (CPND…TAPC), 460-544 (SPEI…TVPC), 545-633 (CPAG…CPLG), and 631-715 (PLGV…YSVT). N-linked (GlcNAc...) asparagine glycosylation occurs at Asn-230. A glycan (N-linked (GlcNAc...) asparagine) is linked at Asn-433.

It is found in the secreted. The sequence is that of Fibronectin type III domain-containing protein 7 (Fndc7) from Mus musculus (Mouse).